Here is a 496-residue protein sequence, read N- to C-terminus: D-2-hydroxyglutarate--pyruvate transhydrogenase DLD3 (496 aa).

K17 is covalently cross-linked (Glycyl lysine isopeptide (Lys-Gly) (interchain with G-Cter in ubiquitin)). Residues 64–243 (YRGQSNLILL…TGVSIVAAAK (180 aa)) form the FAD-binding PCMH-type domain.

The protein belongs to the FAD-binding oxidoreductase/transferase type 4 family. It depends on FAD as a cofactor.

Its subcellular location is the cytoplasm. The catalysed reaction is (R)-lactate + 2 Fe(III)-[cytochrome c] = 2 Fe(II)-[cytochrome c] + pyruvate + 2 H(+). It carries out the reaction (R)-2-hydroxyglutarate + pyruvate = (R)-lactate + 2-oxoglutarate. In terms of biological role, catalyzes the reversible oxidation of (R)-2-hydroxyglutarate to 2-oxoglutarate coupled to reduction of pyruvate to (R)-lactate. Can also use oxaloacetate as electron acceptor instead of pyruvate producing (R)-malate. The sequence is that of D-2-hydroxyglutarate--pyruvate transhydrogenase DLD3 (DLD3) from Saccharomyces cerevisiae (strain ATCC 204508 / S288c) (Baker's yeast).